Reading from the N-terminus, the 943-residue chain is Neutral alpha-glucosidase AB (943 aa).

The first 23 residues, 1 to 23, serve as a signal peptide directing secretion; that stretch reads MRKLVILIILSIVCSLFIGSIES. Residues 186-231 form a disordered region; sequence FEPISDKPQPLPPKEKKSEEENKEANQEEDNNNNNNDNNEEQQVST. Basic and acidic residues predominate over residues 198 to 211; it reads PKEKKSEEENKEAN. Asp-540 acts as the Nucleophile in catalysis. Residue Glu-543 is part of the active site. Asp-617 acts as the Proton donor in catalysis. 3 N-linked (GlcNAc...) asparagine glycosylation sites follow: Asn-878, Asn-887, and Asn-907.

This sequence belongs to the glycosyl hydrolase 31 family.

The protein localises to the endoplasmic reticulum. It localises to the golgi apparatus. The catalysed reaction is N(4)-(alpha-D-Glc-(1-&gt;3)-alpha-D-Man-(1-&gt;2)-alpha-D-Man-(1-&gt;2)-alpha-D-Man-(1-&gt;3)-[alpha-D-Man-(1-&gt;2)-alpha-D-Man-(1-&gt;3)-[alpha-D-Man-(1-&gt;2)-alpha-D-Man-(1-&gt;6)]-alpha-D-Man-(1-&gt;6)]-beta-D-Man-(1-&gt;4)-beta-D-GlcNAc-(1-&gt;4)-beta-D-GlcNAc)-L-asparaginyl-[protein] + H2O = N(4)-(alpha-D-Man-(1-&gt;2)-alpha-D-Man-(1-&gt;2)-alpha-D-Man-(1-&gt;3)-[alpha-D-Man-(1-&gt;2)-alpha-D-Man-(1-&gt;3)-[alpha-D-Man-(1-&gt;2)-alpha-D-Man-(1-&gt;6)]-alpha-D-Man-(1-&gt;6)]-beta-D-Man-(1-&gt;4)-beta-D-GlcNAc-(1-&gt;4)-beta-D-GlcNAc)-L-asparaginyl-[protein] (N-glucan mannose isomer 9A1,2,3B1,2,3) + beta-D-glucose. It catalyses the reaction N(4)-(alpha-D-Glc-(1-&gt;3)-alpha-D-Glc-(1-&gt;3)-alpha-D-Man-(1-&gt;2)-alpha-D-Man-(1-&gt;2)-alpha-D-Man-(1-&gt;3)-[alpha-D-Man-(1-&gt;2)-alpha-D-Man-(1-&gt;3)-[alpha-D-Man-(1-&gt;2)-alpha-D-Man-(1-&gt;6)]-alpha-D-Man-(1-&gt;6)]-beta-D-Man-(1-&gt;4)-beta-D-GlcNAc-(1-&gt;4)-beta-D-GlcNAc)-L-asparaginyl-[protein] + H2O = N(4)-(alpha-D-Glc-(1-&gt;3)-alpha-D-Man-(1-&gt;2)-alpha-D-Man-(1-&gt;2)-alpha-D-Man-(1-&gt;3)-[alpha-D-Man-(1-&gt;2)-alpha-D-Man-(1-&gt;3)-[alpha-D-Man-(1-&gt;2)-alpha-D-Man-(1-&gt;6)]-alpha-D-Man-(1-&gt;6)]-beta-D-Man-(1-&gt;4)-beta-D-GlcNAc-(1-&gt;4)-beta-D-GlcNAc)-L-asparaginyl-[protein] + beta-D-glucose. Its pathway is glycan metabolism; N-glycan metabolism. Cleaves sequentially the 2 innermost alpha-1,3-linked glucose residues from N-linked oligosaccharides on newly synthesized glycoproteins. The sequence is that of Neutral alpha-glucosidase AB (modA) from Dictyostelium discoideum (Social amoeba).